Consider the following 1096-residue polypeptide: MATVPVYCVCRLPYDVTRFMIECDACKDWFHGSCVGVEEEEAPDIDIYHCPNCEKTHGKSTLKKKRTWHKHGPGQAPDVKPVQNGSQLFIKELRSRTFPSAEDVVARVPGSQLTLGYMEEHGFTEPILVPKKDGLGLAVPAPTFYVSDVENYVGPERSVDVTDVTKQKDCKMKLKEFVDYYYSTNRKRVLNVTNLEFSDTRMSSFVEPPDIVKKLSWVENYWPDDALLAKPKVTKYCLICVKDSYTDFHIDSGGASAWYHVLKGEKTFYLIRPASANISLYERWRSASNHSEMFFADQVDKCYKCIVKQGQTLFIPSGWIYATLTPVDCLAFAGHFLHSLSVEMQMRAYEVERRLKLGSLTQFPNFETACWYMGKHLLEAFKGSHKSGKQLPPHLVQGAKILNGAFRSWTKKQALAEHEDELPEHFKPSQLIKDLAKEIRLSENASKAVRPEVNTVASSDEVCDGDREKEEPPSPIEATPPQSLLEKVSKKKTPKTVKMPKPSKIPKPPKPPKPPRPPKTLKLKDGGKKKGKKSRESASPTIPNLDLLEAHTKEALTKMEPPKKGKATKSVLSVPNKDVVHMQNDVERLEIREQTKSKSEAKWKYKNSKPDSLLKMEEEQKLEKSPLAGNKDNKFSFSFSNKKLLGSKALRPPTSPGVFGALQNFKEDKPKPVRDEYEYVSDDGELKIDEFPIRRKKNAPKRDLSFLLDKKAVLPTPVTKPKLDSAAYKSDDSSDEGSLHIDTDTKPGRNARVKKESGSSAAGILDLLQASEEVGALEYNPSSQPPASPSTQEAIQGMLSMANLQASDSCLQTTWGAGQAKGSSLAAHGARKNGGGSGKSAGKRLLKRAAKNSVDLDDYEEEQDHLDACFKDSDYVYPSLESDEDNPIFKSRSKKRKGSDDAPYSPTARVGPSVPRQDRPVREGTRVASIETGLAAAAAKLSQQEEQKSKKKKSAKRKLTPNTTSPSTSTSISAGTTSTSTTPASTTPASTTPASTSTASSQASQEGSSPEPPPESHSSSLADHEYTAAGTFTGAQAGRTSQPMAPGVFLTQRRPSASSPNNNTAAKGKRTKKGMATAKQRLGKILKIHRNGKLLL.

The PHD-type zinc-finger motif lies at 5–56 (PVYCVCRLPYDVTRFMIECDACKDWFHGSCVGVEEEEAPDIDIYHCPNCEKT). Residues Thr193 and Thr246 each coordinate 2-oxoglutarate. A JmjC domain is found at 197 to 353 (FSDTRMSSFV…MQMRAYEVER (157 aa)). Fe cation-binding residues include His249 and Asp251. Residues Tyr259, Lys266, Tyr321, and Thr323 each coordinate 2-oxoglutarate. Tyr321 contacts Fe cation. 2 disordered regions span residues 447–634 (KAVR…KDNK) and 646–674 (GSKA…KPVR). Ser474 is subject to Phosphoserine. Phosphothreonine is present on Thr479. Pro residues predominate over residues 503–518 (SKIPKPPKPPKPPRPP). A Phosphoserine modification is found at Ser539. 2 stretches are compositionally biased toward basic and acidic residues: residues 548-563 (LEAH…EPPK) and 578-624 (DVVH…KLEK). Ser655 carries the phosphoserine modification. Residues 665–674 (FKEDKPKPVR) show a composition bias toward basic and acidic residues. Ser681 and Ser705 each carry phosphoserine. Lys711 is covalently cross-linked (Glycyl lysine isopeptide (Lys-Gly) (interchain with G-Cter in SUMO2)). Disordered stretches follow at residues 719–799 (TKPK…QGML), 817–846 (AGQA…KRLL), and 877–1078 (YPSL…MATA). An N6-acetyllysine modification is found at Lys720. Position 728 is a phosphotyrosine (Tyr728). Residues 729–757 (KSDDSSDEGSLHIDTDTKPGRNARVKKES) are compositionally biased toward basic and acidic residues. 4 positions are modified to phosphoserine: Ser730, Ser733, Ser734, and Ser738. Phosphoserine is present on residues Ser879, Ser882, and Ser899. Residues 916-925 (RQDRPVREGT) show a composition bias toward basic and acidic residues. The segment covering 949-959 (SKKKKSAKRKL) has biased composition (basic residues). 2 stretches are compositionally biased toward low complexity: residues 960 to 1009 (TPNT…EGSS) and 1027 to 1040 (TAAG…AGRT). A compositionally biased stretch (polar residues) spans 1053–1065 (RRPSASSPNNNTA). Phosphoserine; by PKA is present on Ser1056.

Belongs to the JHDM1 histone demethylase family. JHDM1D subfamily. In terms of assembly, component of the PHF2-ARID5B complex, at least composed of PHF2 and ARID5B. Interacts with HNF4A and NR1H4. Interacts with RELA. In terms of processing, phosphorylated by PKA on specific serine residues, leading to the formation of an active lysine demethylase complex. In terms of tissue distribution, widely expressed, including in liver (at protein level).

Its subcellular location is the nucleus. It localises to the nucleolus. It is found in the chromosome. The protein resides in the centromere. The protein localises to the kinetochore. It carries out the reaction N(6),N(6)-dimethyl-L-lysyl(9)-[histone H3] + 2-oxoglutarate + O2 = N(6)-methyl-L-lysyl(9)-[histone H3] + formaldehyde + succinate + CO2. Its activity is regulated as follows. Enzymatically inactive by itself, and become active following phosphorylation by PKA. Its function is as follows. Lysine demethylase that demethylates both histones and non-histone proteins. Enzymatically inactive by itself, and becomes active following phosphorylation by PKA: forms a complex with ARID5B and mediates demethylation of methylated ARID5B. Demethylation of ARID5B leads to target the PHF2-ARID5B complex to target promoters, where PHF2 mediates demethylation of dimethylated 'Lys-9' of histone H3 (H3K9me2), followed by transcription activation of target genes. The PHF2-ARID5B complex acts as a coactivator of HNF4A in liver. PHF2 is recruited to trimethylated 'Lys-4' of histone H3 (H3K4me3) at rDNA promoters and promotes expression of rDNA. Involved in the activation of toll-like receptor 4 (TLR4)-target inflammatory genes in macrophages by catalyzing the demethylation of trimethylated histone H4 lysine 20 (H4K20me3) at the gene promoters. In Homo sapiens (Human), this protein is Lysine-specific demethylase PHF2.